We begin with the raw amino-acid sequence, 117 residues long: uncharacterized protein (117 aa).

The protein resides in the cytoplasm. It localises to the nucleus. This is an uncharacterized protein from Saccharomyces cerevisiae (strain ATCC 204508 / S288c) (Baker's yeast).